We begin with the raw amino-acid sequence, 942 residues long: UvrABC system protein A (942 aa).

32–39 (GLSGSGKS) is a binding site for ATP. The segment at 251–278 (CPVCGFTVPELEPRLFSFNAPFGSCPTC) adopts a C4-type zinc-finger fold. 2 ABC transporter domains span residues 308-589 (WNPI…KKSI) and 609-937 (GNGR…HYLK). 641-648 (GVSGSGKS) contacts ATP. The C4-type zinc-finger motif lies at 740–766 (CEACSGDGIIKIEMHFLPDVYVPCEVC).

The protein belongs to the ABC transporter superfamily. UvrA family. Forms a heterotetramer with UvrB during the search for lesions.

The protein localises to the cytoplasm. Its function is as follows. The UvrABC repair system catalyzes the recognition and processing of DNA lesions. UvrA is an ATPase and a DNA-binding protein. A damage recognition complex composed of 2 UvrA and 2 UvrB subunits scans DNA for abnormalities. When the presence of a lesion has been verified by UvrB, the UvrA molecules dissociate. The sequence is that of UvrABC system protein A from Streptococcus pyogenes serotype M18 (strain MGAS8232).